The primary structure comprises 263 residues: 5'-nucleotidase SurE (263 aa).

A divalent metal cation-binding residues include Asp-8, Asp-9, Ser-40, and Asn-93.

This sequence belongs to the SurE nucleotidase family. It depends on a divalent metal cation as a cofactor.

The protein resides in the cytoplasm. It carries out the reaction a ribonucleoside 5'-phosphate + H2O = a ribonucleoside + phosphate. Functionally, nucleotidase that shows phosphatase activity on nucleoside 5'-monophosphates. This chain is 5'-nucleotidase SurE, found in Caulobacter vibrioides (strain ATCC 19089 / CIP 103742 / CB 15) (Caulobacter crescentus).